The chain runs to 269 residues: Putative pyruvate, phosphate dikinase regulatory protein (269 aa).

147–154 (GVSRTSKT) is a binding site for ADP.

The protein belongs to the pyruvate, phosphate/water dikinase regulatory protein family. PDRP subfamily.

The enzyme catalyses N(tele)-phospho-L-histidyl/L-threonyl-[pyruvate, phosphate dikinase] + ADP = N(tele)-phospho-L-histidyl/O-phospho-L-threonyl-[pyruvate, phosphate dikinase] + AMP + H(+). It carries out the reaction N(tele)-phospho-L-histidyl/O-phospho-L-threonyl-[pyruvate, phosphate dikinase] + phosphate + H(+) = N(tele)-phospho-L-histidyl/L-threonyl-[pyruvate, phosphate dikinase] + diphosphate. Its function is as follows. Bifunctional serine/threonine kinase and phosphorylase involved in the regulation of the pyruvate, phosphate dikinase (PPDK) by catalyzing its phosphorylation/dephosphorylation. This is Putative pyruvate, phosphate dikinase regulatory protein from Geotalea uraniireducens (strain Rf4) (Geobacter uraniireducens).